A 512-amino-acid chain; its full sequence is MNELESFSPRHEGHHHAANIKYGYIVLGFSVVHIIGILICKSVFKLRWTTSTKGIDFVKSPLFISIIAWTLILIGLGVFHVQLPENYVTSIKRFGRMSYALLPFDIFLVLRPNSIGLRYLELMDLHKWMSRVIIAGAIIHGVGYFIKWILEGSLFTKSVRLWNFLGIVVFMLNLILIIISLRYFRRRIYQYFYVVHNITVWLFVGLICLHARPGVGKYAIACASLLGLQIFERYAKSHSISDLKVISYEGSNLIVVRIQRDSKIADWPSGSHIRLTYPLTNYRSWIFPTHPYTIASLESDEMLDLIISKSNRFILHPQMPYSWTGPFTSFSKELLQTIDNVDIICGGSGISFALPVFRNLKQKASHVKLIWCVRSNNDLHVLRTLNFNEEIIIHITGNLQDSTSNTIFDEEDYGLLDYDNNENFELESLPSSETPSRTVNDDSLSQDTRPKKESKFIIVQGRPDFGNTFESLVQVNSSNKWIIACGPRSLVNSAQEWASENKVNFVSEIYEM.

7 consecutive transmembrane segments (helical) span residues 20 to 40, 61 to 81, 97 to 117, 132 to 152, 161 to 181, 191 to 211, and 218 to 235; these read IKYGYIVLGFSVVHIIGILIC, PLFISIIAWTLILIGLGVFHV, MSYALLPFDIFLVLRPNSIGL, VIIAGAIIHGVGYFIKWILEG, LWNFLGIVVFMLNLILIIISL, YFYVVHNITVWLFVGLICLHA, and YAIACASLLGLQIFERYA. A Ferric oxidoreductase domain is found at 94–206; it reads FGRMSYALLP…NITVWLFVGL (113 aa). Positions 230-355 constitute an FAD-binding FR-type domain; sequence IFERYAKSHS…GGSGISFALP (126 aa). A compositionally biased stretch (low complexity) spans 427–436; the sequence is ESLPSSETPS. Residues 427 to 451 are disordered; that stretch reads ESLPSSETPSRTVNDDSLSQDTRPK. The segment covering 437–447 has biased composition (polar residues); the sequence is RTVNDDSLSQD.

This sequence belongs to the ferric reductase (FRE) family. AIM14 subfamily.

Its subcellular location is the membrane. Probable cell surface metalloreductase. May be involved in iron or copper homeostasis. The chain is Probable metalloreductase AIM14 (AIM14) from Debaryomyces hansenii (strain ATCC 36239 / CBS 767 / BCRC 21394 / JCM 1990 / NBRC 0083 / IGC 2968) (Yeast).